A 365-amino-acid chain; its full sequence is Histidinol-phosphate aminotransferase (365 aa).

The tract at residues 1–22 (MSRPVPNPGILDIAPYTPGKSP) is disordered. Residue K221 is modified to N6-(pyridoxal phosphate)lysine.

This sequence belongs to the class-II pyridoxal-phosphate-dependent aminotransferase family. Histidinol-phosphate aminotransferase subfamily. As to quaternary structure, homodimer. The cofactor is pyridoxal 5'-phosphate.

The catalysed reaction is L-histidinol phosphate + 2-oxoglutarate = 3-(imidazol-4-yl)-2-oxopropyl phosphate + L-glutamate. The protein operates within amino-acid biosynthesis; L-histidine biosynthesis; L-histidine from 5-phospho-alpha-D-ribose 1-diphosphate: step 7/9. The chain is Histidinol-phosphate aminotransferase from Nitrobacter winogradskyi (strain ATCC 25391 / DSM 10237 / CIP 104748 / NCIMB 11846 / Nb-255).